Consider the following 124-residue polypeptide: Small ribosomal subunit protein bS6m (124 aa).

Belongs to the bacterial ribosomal protein bS6 family. Component of the mitochondrial ribosome small subunit (28S) which comprises a 12S rRNA and about 30 distinct proteins.

The protein localises to the mitochondrion. The polypeptide is Small ribosomal subunit protein bS6m (MRPS6) (Bos taurus (Bovine)).